An 88-amino-acid chain; its full sequence is Small ribosomal subunit protein uS15 (88 aa).

It belongs to the universal ribosomal protein uS15 family. In terms of assembly, part of the 30S ribosomal subunit. Forms a bridge to the 50S subunit in the 70S ribosome, contacting the 23S rRNA.

Its function is as follows. One of the primary rRNA binding proteins, it binds directly to 16S rRNA where it helps nucleate assembly of the platform of the 30S subunit by binding and bridging several RNA helices of the 16S rRNA. In terms of biological role, forms an intersubunit bridge (bridge B4) with the 23S rRNA of the 50S subunit in the ribosome. In Methylacidiphilum infernorum (isolate V4) (Methylokorus infernorum (strain V4)), this protein is Small ribosomal subunit protein uS15.